Consider the following 593-residue polypeptide: Proline--tRNA ligase (593 aa).

It belongs to the class-II aminoacyl-tRNA synthetase family. ProS type 1 subfamily. As to quaternary structure, homodimer.

It localises to the cytoplasm. The catalysed reaction is tRNA(Pro) + L-proline + ATP = L-prolyl-tRNA(Pro) + AMP + diphosphate. In terms of biological role, catalyzes the attachment of proline to tRNA(Pro) in a two-step reaction: proline is first activated by ATP to form Pro-AMP and then transferred to the acceptor end of tRNA(Pro). As ProRS can inadvertently accommodate and process non-cognate amino acids such as alanine and cysteine, to avoid such errors it has two additional distinct editing activities against alanine. One activity is designated as 'pretransfer' editing and involves the tRNA(Pro)-independent hydrolysis of activated Ala-AMP. The other activity is designated 'posttransfer' editing and involves deacylation of mischarged Ala-tRNA(Pro). The misacylated Cys-tRNA(Pro) is not edited by ProRS. The protein is Proline--tRNA ligase of Parasynechococcus marenigrum (strain WH8102).